Consider the following 187-residue polypeptide: Peptidyl-tRNA hydrolase (187 aa).

Y18 contributes to the tRNA binding site. H23 (proton acceptor) is an active-site residue. TRNA-binding residues include F65, N67, and N113.

It belongs to the PTH family. As to quaternary structure, monomer.

The protein resides in the cytoplasm. The enzyme catalyses an N-acyl-L-alpha-aminoacyl-tRNA + H2O = an N-acyl-L-amino acid + a tRNA + H(+). Functionally, hydrolyzes ribosome-free peptidyl-tRNAs (with 1 or more amino acids incorporated), which drop off the ribosome during protein synthesis, or as a result of ribosome stalling. Catalyzes the release of premature peptidyl moieties from peptidyl-tRNA molecules trapped in stalled 50S ribosomal subunits, and thus maintains levels of free tRNAs and 50S ribosomes. This is Peptidyl-tRNA hydrolase from Coxiella burnetii (strain CbuK_Q154) (Coxiella burnetii (strain Q154)).